Consider the following 1106-residue polypeptide: MSAKAVSELSGKEVLYKYFEPSGLLSAPHAFHVKAGENFDEIANKYEWLARDNKGVIKPDQLIKRRGKLGLVKIGTPQELKAWFEKTGDSYVRVGQTEGRLHTFIVEPFCAHTEKDEMYIAIYSERFRDVIMFYEQGGVDIGDVEEKARTVSVPVQLNENAMTPSDEELTTLLGPLKDSDIVRRFVVELYKAYKDLHFTYLEINPFVLLNNQIHVLDLAARLDETANFLCADKWKSRLTPYGGPNHVEFPAPFGRDLTSEEQYISEMDAKTGASLKLTILNRKGRVWTMVAGGGASVVFTDTVCDLGGASELANYGEYSGDPSESQTYEYAKTLLSVMTEGTPRPDGKVLIIGGSIANFTNVAKTFGGIVRAFETFVSKLKEHKVTIFVRRGGPNYQEGLRRIKDAATKLELPIHVFGPETHMTAIVGAALGVKPMPTVPTAPQTTGQFLLSPERNTGGTERAPPSPAANATPTEHPLTTAQQNKLKSFRGLFEDDTKAIIWGQQAKAIQGMLDFDYVCRRSSPSVVASTYPFTGDNKQKYYFGQKEILIPAYKSMAKAFATHPDASIMVTFASMRSVFETVLEALEFPQIKVIAIIAEGVPENQTRKLLKIAHDRGVTLVGPATVGGIKPGCFKIGNTGGMMDNILASKLYRPGSVAYVSRSGGMSNELNNIISQNTNGVYEGIAIGGDRYPGSTYTDHVIRYQNDDRVKMIVLLGEVGGVEEYKIVDLLKQKKVTKPLVAWCIGTCADHITSEVQFGHAGASANALGETAACKNAALRASGALVPESFDDLGNKIRQTYDELVSQQIIVPQPEVPPPAVPMDYAWARELGLIRKPASFMTSICDERGEELNYAGVPITKVLESDMGIGGVLGLLWFQKRLPPHANKFIEICLMLTADHGPAVSGAHNTIVCARAGKDLISSLTSGLLTIGDRFGGALDGAARQFSEAFDQGWSANQFVSEMRKKGKHIMGIGHRVKSINNPDKRVEILKRFAMDKKEFAQETPLFEYALEVEKITTAKKPNLILNVDGAIAILFVDILRHSGMFTKQEAEETIEIGSLNGLFVLGRSIGFIGHYLDQSRLKQGLYRHPWDDISYIMPESNLVKF.

Residues Asn358, Thr360, and Arg391 each contribute to the citrate site. Over residues 442 to 459 (APQTTGQFLLSPERNTGG) the composition is skewed to polar residues. Positions 442–478 (APQTTGQFLLSPERNTGGTERAPPSPAANATPTEHPL) are disordered. Residues 701 to 721 (VIRY…EVGG) and 752 to 778 (ITSE…KNAA) contribute to the ATP site. Mg(2+) is bound at residue Glu718. His760 acts as the Tele-phosphohistidine intermediate in catalysis. CoA is bound at residue 779–789 (LRASGALVPES).

It in the N-terminal section; belongs to the succinate/malate CoA ligase beta subunit family. This sequence in the C-terminal section; belongs to the succinate/malate CoA ligase alpha subunit family. In terms of assembly, homotetramer.

The protein resides in the cytoplasm. The catalysed reaction is oxaloacetate + acetyl-CoA + ADP + phosphate = citrate + ATP + CoA. Functionally, catalyzes the cleavage of citrate into oxaloacetate and acetyl-CoA, the latter serving as common substrate in multiple biochemical reactions in protein, carbohydrate and lipid metabolism. This chain is Probable ATP-citrate synthase, found in Caenorhabditis elegans.